Here is a 305-residue protein sequence, read N- to C-terminus: Sulfate adenylyltransferase subunit 2 (305 aa).

It belongs to the PAPS reductase family. CysD subfamily. In terms of assembly, heterodimer composed of CysD, the smaller subunit, and CysN.

The catalysed reaction is sulfate + ATP + H(+) = adenosine 5'-phosphosulfate + diphosphate. Its pathway is sulfur metabolism; hydrogen sulfide biosynthesis; sulfite from sulfate: step 1/3. Functionally, with CysN forms the ATP sulfurylase (ATPS) that catalyzes the adenylation of sulfate producing adenosine 5'-phosphosulfate (APS) and diphosphate, the first enzymatic step in sulfur assimilation pathway. APS synthesis involves the formation of a high-energy phosphoric-sulfuric acid anhydride bond driven by GTP hydrolysis by CysN coupled to ATP hydrolysis by CysD. The protein is Sulfate adenylyltransferase subunit 2 of Ectopseudomonas mendocina (strain ymp) (Pseudomonas mendocina).